A 78-amino-acid chain; its full sequence is Acyl carrier protein (78 aa).

One can recognise a Carrier domain in the interval 2–77 (SDIADRVKKI…DAIKFLEKNS (76 aa)). Ser-37 bears the O-(pantetheine 4'-phosphoryl)serine mark.

The protein belongs to the acyl carrier protein (ACP) family. 4'-phosphopantetheine is transferred from CoA to a specific serine of apo-ACP by AcpS. This modification is essential for activity because fatty acids are bound in thioester linkage to the sulfhydryl of the prosthetic group.

The protein resides in the cytoplasm. The protein operates within lipid metabolism; fatty acid biosynthesis. Functionally, carrier of the growing fatty acid chain in fatty acid biosynthesis. The protein is Acyl carrier protein of Methylobacterium sp. (strain 4-46).